Here is a 313-residue protein sequence, read N- to C-terminus: Olfactory receptor 4M2 (313 aa).

Residues 1–25 (METANYTKVTEFVLTGLSQTPEVQL) lie on the Extracellular side of the membrane. Asparagine 5 carries N-linked (GlcNAc...) asparagine glycosylation. The chain crosses the membrane as a helical span at residues 26–49 (VLFVIFLSFYLFILPGNILIICTI). Over 50 to 57 (SLDPHLTS) the chain is Cytoplasmic. Residues 58-79 (PMYFLLANLAFLDIWYSSITAP) traverse the membrane as a helical segment. Topologically, residues 80–100 (EMLIDFFVERKIISFDGCIAQ) are extracellular. An intrachain disulfide couples cysteine 97 to cysteine 189. Residues 101–120 (LFFLHFAGASEMFLLTVMAF) traverse the membrane as a helical segment. The Cytoplasmic portion of the chain corresponds to 121 to 139 (DLYTAICRPLHYATIMNQR). The helical transmembrane segment at 140-158 (LCCILVALSWRGGFIHSII) threads the bilayer. Topologically, residues 159–195 (QVALIVRLPFCGPNELDSYFCDITQVVRIACANTFPE) are extracellular. Residues 196 to 219 (ELVMICSSGLISVVCLIALLMSYA) form a helical membrane-spanning segment. Residues 220 to 237 (FLLALFKKLSGSGENTNR) are Cytoplasmic-facing. The helical transmembrane segment at 238–260 (AMSTCYSHITIVVLMFGPSIYIY) threads the bilayer. At 261-271 (ARPFDSFSLDK) the chain is on the extracellular side. Residues 272-291 (VVSVFNTLIFPLRNPIIYTL) form a helical membrane-spanning segment. The Cytoplasmic portion of the chain corresponds to 292 to 313 (RNKEVKAAMRKLVTKYILCKEK).

The protein belongs to the G-protein coupled receptor 1 family.

The protein resides in the cell membrane. Functionally, odorant receptor. The polypeptide is Olfactory receptor 4M2 (OR4M2) (Homo sapiens (Human)).